A 129-amino-acid polypeptide reads, in one-letter code: Large ribosomal subunit protein mL53 (129 aa).

A mitochondrion-targeting transit peptide spans 1–50 (MREKLNLLAKLKSVVYKFDPLNPNTRSIRSFIPLTTCKRSRQLAPECSIS).

It belongs to the mitochondrion-specific ribosomal protein mL53 family.

The protein localises to the mitochondrion. This Dictyostelium discoideum (Social amoeba) protein is Large ribosomal subunit protein mL53 (mrpl53).